The sequence spans 186 residues: Myosin light chain 1, skeletal muscle isoform (186 aa).

Met1 bears the Blocked amino end (Met) mark. The tract at residues 1–26 is disordered; it reads MPKAPAKKAEPAPAPAPAPEPAPAPA. Positions 12–26 are enriched in pro residues; the sequence is APAPAPAPEPAPAPA. EF-hand domains lie at 42–77 and 119–154; these read DQIE…LGQN and AGFE…LGEK.

In terms of assembly, myosin is a hexamer of 2 heavy chains and 4 light chains.

The protein is Myosin light chain 1, skeletal muscle isoform of Chelon ramada (Thin-lipped grey mullet).